A 493-amino-acid polypeptide reads, in one-letter code: L-arabinose isomerase 1 (493 aa).

Positions 301, 326, 343, and 442 each coordinate Mn(2+).

The protein belongs to the arabinose isomerase family. Requires Mn(2+) as cofactor.

The catalysed reaction is beta-L-arabinopyranose = L-ribulose. The protein operates within carbohydrate degradation; L-arabinose degradation via L-ribulose; D-xylulose 5-phosphate from L-arabinose (bacterial route): step 1/3. Its function is as follows. Catalyzes the conversion of L-arabinose to L-ribulose. This chain is L-arabinose isomerase 1, found in Bacillus licheniformis (strain ATCC 14580 / DSM 13 / JCM 2505 / CCUG 7422 / NBRC 12200 / NCIMB 9375 / NCTC 10341 / NRRL NRS-1264 / Gibson 46).